The following is a 217-amino-acid chain: MAVSSTTLSSPTPPECLQQQEAPRPPATRGRLVVLTGPSGVGKGTLVSQLRQRHPELYFSVSVTTRPPRPGEQEGVNYYFRTREEFLNLIEADELLEWAQYAGNFYGTPREIVFQKLSQGQDVLLEIELAGARQVRQQCPDAIRIFLSPPSLEELERRIRERGQDSEASIQRRLQQARKELDAKDEFDYVIVNDNLEQALQELEALLYPPSPGKGQS.

The span at 1 to 10 (MAVSSTTLSS) shows a compositional bias: low complexity. The disordered stretch occupies residues 1 to 30 (MAVSSTTLSSPTPPECLQQQEAPRPPATRG). The Guanylate kinase-like domain occupies 30 to 208 (GRLVVLTGPS…ALQELEALLY (179 aa)). 37 to 44 (GPSGVGKG) is an ATP binding site.

It belongs to the guanylate kinase family.

The protein resides in the cytoplasm. It catalyses the reaction GMP + ATP = GDP + ADP. The catalysed reaction is dZMP + ATP = dZDP + ADP. It participates in purine metabolism. In terms of biological role, essential for recycling GMP and indirectly, cGMP. Its function is as follows. (Microbial infection) Catalyzes the phosphorylation of dZMP to dZDP, when the bacterium is infected by a phage that produces the substrate for the synthesis of dZTP (2- amino-2'-deoxyadenosine 5'-triphosphate), which is then used by the phage as a DNA polymerase substrate. In Synechococcus sp. (strain JA-3-3Ab) (Cyanobacteria bacterium Yellowstone A-Prime), this protein is Guanylate kinase.